The sequence spans 247 residues: uncharacterized protein (247 aa).

Residues S200–N225 are a coiled coil.

This is an uncharacterized protein from Acanthamoeba polyphaga (Amoeba).